The sequence spans 208 residues: CD209 antigen-like protein E (208 aa).

Over 1-16 (MRAPQMGSLGFLDKGH) the chain is Cytoplasmic. The helical; Signal-anchor for type II membrane protein transmembrane segment at 17–37 (IPLVLQLLFLILFTGLLVAII) threads the bilayer. The Extracellular segment spans residues 38–208 (IQVSKMPSSE…KIATTCLSKW (171 aa)). Intrachain disulfides connect Cys77–Cys88, Cys105–Cys197, and Cys176–Cys189. In terms of domain architecture, C-type lectin spans 83-198 (FFNGNCYFFS…CEQRKFWICK (116 aa)).

It is found in the membrane. Functionally, putative pathogen-recognition receptor. May mediate the endocytosis of pathogens which are subsequently degraded in lysosomal compartments. The polypeptide is CD209 antigen-like protein E (Cd209e) (Mus musculus (Mouse)).